A 233-amino-acid chain; its full sequence is Demethylmenaquinone methyltransferase (233 aa).

S-adenosyl-L-methionine contacts are provided by residues Thr58, Asp79, and 106–107 (NA).

It belongs to the class I-like SAM-binding methyltransferase superfamily. MenG/UbiE family.

The enzyme catalyses a 2-demethylmenaquinol + S-adenosyl-L-methionine = a menaquinol + S-adenosyl-L-homocysteine + H(+). It functions in the pathway quinol/quinone metabolism; menaquinone biosynthesis; menaquinol from 1,4-dihydroxy-2-naphthoate: step 2/2. In terms of biological role, methyltransferase required for the conversion of demethylmenaquinol (DMKH2) to menaquinol (MKH2). This Bacillus velezensis (strain DSM 23117 / BGSC 10A6 / LMG 26770 / FZB42) (Bacillus amyloliquefaciens subsp. plantarum) protein is Demethylmenaquinone methyltransferase.